The following is a 332-amino-acid chain: UDP-galactose/UDP-glucose transporter 1 (332 aa).

The next 8 membrane-spanning stretches (helical) occupy residues Ile11 to Leu31, His49 to Ile69, Ala80 to Ile100, Val112 to Ile132, Thr135 to Leu155, Ile206 to Pro226, Ile252 to Ala272, and Trp301 to Leu317. A Di-lysine motif motif is present at residues Lys327–Ser332.

The protein belongs to the nucleotide-sugar transporter family. UDP-galactose:UMP antiporter (TC 2.A.7.11) subfamily.

The protein localises to the endoplasmic reticulum membrane. In terms of biological role, essential sugar transporter required for the transport of UDP-galactose and UDP-glucose from the cytoplasm into the Golgi and the endoplasmic reticulum, to ensure quality control of protein folding. Essential for pollen development and involved in embryo sac progress. The protein is UDP-galactose/UDP-glucose transporter 1 of Arabidopsis thaliana (Mouse-ear cress).